The following is a 250-amino-acid chain: 3-deoxy-manno-octulosonate cytidylyltransferase 1 (250 aa).

The protein belongs to the KdsB family.

Its subcellular location is the cytoplasm. The enzyme catalyses 3-deoxy-alpha-D-manno-oct-2-ulosonate + CTP = CMP-3-deoxy-beta-D-manno-octulosonate + diphosphate. It functions in the pathway nucleotide-sugar biosynthesis; CMP-3-deoxy-D-manno-octulosonate biosynthesis; CMP-3-deoxy-D-manno-octulosonate from 3-deoxy-D-manno-octulosonate and CTP: step 1/1. The protein operates within bacterial outer membrane biogenesis; lipopolysaccharide biosynthesis. Its function is as follows. Activates KDO (a required 8-carbon sugar) for incorporation into bacterial lipopolysaccharide in Gram-negative bacteria. In Actinobacillus pleuropneumoniae serotype 5b (strain L20), this protein is 3-deoxy-manno-octulosonate cytidylyltransferase 1.